Reading from the N-terminus, the 645-residue chain is Cyclin-D-binding Myb-like transcription factor 1 (645 aa).

Disordered stretches follow at residues 34 to 71 (QNDGEDLGSDETTEPVHKRIRLSSEDGEDPQDSASTEY) and 95 to 119 (RDEELESDDLSETTGKDSSAQKKGE). 2 stretches are compositionally biased toward acidic residues: residues 36–46 (DGEDLGSDETT) and 95–105 (RDEELESDDLS). Positions 219–257 (GKYTDEEINKLKELRQKHGNDWATIGSALGRSASSVKDR) constitute a Myb-like 1 domain. The HTH myb-type domain occupies 262 to 327 (KDTCNTGKWT…KWLNYLNWKQ (66 aa)). The segment at residues 300-323 (WASVAELVGTRSEKQCRSKWLNYL) is a DNA-binding region (H-T-H motif). The Myb-like 2 domain maps to 333–382 (WTKEDDINLVRRIAELEVEDENEINWDILASGWSSVRSPQWLRSKWWTIK). Residues 568–645 (VKEEPSENQT…ILENQEEGSN (78 aa)) are disordered. The span at 587-597 (EQSKQGEKTLD) shows a compositional bias: basic and acidic residues. The segment covering 615 to 625 (IPTNEDISSDS) has biased composition (polar residues).

Belongs to the DMTF1 family.

It is found in the nucleus. Its function is as follows. Transcriptional activator which activates the CDKN2A/ARF locus in response to Ras-Raf signaling, thereby promoting p53/TP53-dependent growth arrest. Binds to the consensus sequence 5'-CCCG[GT]ATGT-3'. The protein is Cyclin-D-binding Myb-like transcription factor 1 (dmtf1) of Danio rerio (Zebrafish).